A 457-amino-acid chain; its full sequence is tRNA-2-methylthio-N(6)-dimethylallyladenosine synthase (457 aa).

The MTTase N-terminal domain maps to 18-133; that stretch reads KKLFIETYGC…LPELIASVEA (116 aa). [4Fe-4S] cluster contacts are provided by Cys27, Cys63, Cys97, Cys171, Cys175, and Cys178. The Radical SAM core domain occupies 157 to 390; sequence CGNHISGFVS…IALQNRLSAE (234 aa). The region spanning 393–456 is the TRAM domain; it reads NRCIGKTYEV…SATLKGEEVF (64 aa).

Belongs to the methylthiotransferase family. MiaB subfamily. As to quaternary structure, monomer. It depends on [4Fe-4S] cluster as a cofactor.

The protein localises to the cytoplasm. It carries out the reaction N(6)-dimethylallyladenosine(37) in tRNA + (sulfur carrier)-SH + AH2 + 2 S-adenosyl-L-methionine = 2-methylsulfanyl-N(6)-dimethylallyladenosine(37) in tRNA + (sulfur carrier)-H + 5'-deoxyadenosine + L-methionine + A + S-adenosyl-L-homocysteine + 2 H(+). Functionally, catalyzes the methylthiolation of N6-(dimethylallyl)adenosine (i(6)A), leading to the formation of 2-methylthio-N6-(dimethylallyl)adenosine (ms(2)i(6)A) at position 37 in tRNAs that read codons beginning with uridine. The polypeptide is tRNA-2-methylthio-N(6)-dimethylallyladenosine synthase (Bacteroides fragilis (strain ATCC 25285 / DSM 2151 / CCUG 4856 / JCM 11019 / LMG 10263 / NCTC 9343 / Onslow / VPI 2553 / EN-2)).